Here is a 619-residue protein sequence, read N- to C-terminus: Isocitrate dehydrogenase kinase/phosphatase (619 aa).

ATP contacts are provided by residues 354–360 (APGIRGM) and K375. The active site involves D409.

It belongs to the AceK family.

Its subcellular location is the cytoplasm. The enzyme catalyses L-seryl-[isocitrate dehydrogenase] + ATP = O-phospho-L-seryl-[isocitrate dehydrogenase] + ADP + H(+). In terms of biological role, bifunctional enzyme which can phosphorylate or dephosphorylate isocitrate dehydrogenase (IDH) on a specific serine residue. This is a regulatory mechanism which enables bacteria to bypass the Krebs cycle via the glyoxylate shunt in response to the source of carbon. When bacteria are grown on glucose, IDH is fully active and unphosphorylated, but when grown on acetate or ethanol, the activity of IDH declines drastically concomitant with its phosphorylation. The polypeptide is Isocitrate dehydrogenase kinase/phosphatase (Bordetella bronchiseptica (strain ATCC BAA-588 / NCTC 13252 / RB50) (Alcaligenes bronchisepticus)).